A 99-amino-acid chain; its full sequence is uncharacterized protein (99 aa).

This is an uncharacterized protein from Saccharolobus islandicus (Sulfolobus islandicus).